The following is a 447-amino-acid chain: MREIVHVQAGQCGNQIGSKFWEVISDEHGIDPTGSYHGDSDLQLERINCYFNEATGGRYVPRAILMDLEPGTMDSVRAGPFGQLFRPDNFVFGQTGAGNNWAKGHYTEGAELIDSVLDVVRKEAESCDALQGFQLTHSMGGGTGAGMGTLLISKVREEYPDRVMSTYSVIPSPKVSDTVVEPYNATLSVHQLVENADQCFTLDNEALYDICFRTLKLTTPTYGDLNHLVSAAICGTTCSLRFPGQLNCDLRKLAVNMVPFPRLHFFMIGFAPLTSRGSQQYRALTVPELTQQCFDSKNMMCAADPRHGRYLTCAVMFRGRMSTKEVDEQMLNVVNKNSSYFVEWIPNNVKASICDIPPKGLKMSTTFVGNTTAIQEVWKRVAEQFTSMFRRKAFLHWYTGEGMDEMEFTEAESNMNDLVSEYQQYQDATAEEEGEFDEDEELDDAMG.

Residues glutamine 11, glutamate 69, serine 138, glycine 142, threonine 143, glycine 144, asparagine 204, and asparagine 226 each contribute to the GTP site. Glutamate 69 contacts Mg(2+). The segment at 424-447 is disordered; it reads QYQDATAEEEGEFDEDEELDDAMG. The segment covering 429 to 447 has biased composition (acidic residues); sequence TAEEEGEFDEDEELDDAMG.

Belongs to the tubulin family. In terms of assembly, dimer of alpha and beta chains. A typical microtubule is a hollow water-filled tube with an outer diameter of 25 nm and an inner diameter of 15 nM. Alpha-beta heterodimers associate head-to-tail to form protofilaments running lengthwise along the microtubule wall with the beta-tubulin subunit facing the microtubule plus end conferring a structural polarity. Microtubules usually have 13 protofilaments but different protofilament numbers can be found in some organisms and specialized cells. Mg(2+) is required as a cofactor.

Its subcellular location is the cytoplasm. It localises to the cytoskeleton. Its function is as follows. Tubulin is the major constituent of microtubules, a cylinder consisting of laterally associated linear protofilaments composed of alpha- and beta-tubulin heterodimers. Microtubules grow by the addition of GTP-tubulin dimers to the microtubule end, where a stabilizing cap forms. Below the cap, tubulin dimers are in GDP-bound state, owing to GTPase activity of alpha-tubulin. In Ectocarpus variabilis (Brown alga), this protein is Tubulin beta-5 chain (TUBB5).